A 261-amino-acid chain; its full sequence is MAHQAHAYHMVDPSPWPLTGAVAALLMSSGLAIWFHLHSMTLIVLGMILLILTMIQWWRDIIREGTFQGHHTPPVQKGLRYGMILFITSEVFFFLGFFWAFYHSSLAPTPELGGCWPPTGLTTLDPFEVPLLNTAVLLASGVTVTWAHHSLMEGERKQAIQSLALTILLGLYFTALQAMEYYEAPFTIADGVYGSTFFVATGFHGLHVIIGSTFLAVCLLRQVLFHFTSDHHFGFEAAAWYWHFVDVVWLFLYVSIYWWGS.

Residues Met1–Pro15 are Mitochondrial matrix-facing. The helical transmembrane segment at Trp16 to Trp34 threads the bilayer. Over Phe35 to Met40 the chain is Mitochondrial intermembrane. A helical membrane pass occupies residues Thr41 to Thr66. The Mitochondrial matrix segment spans residues Phe67–Thr72. The chain crosses the membrane as a helical span at residues Pro73 to Ser105. The Mitochondrial intermembrane segment spans residues Leu106–Glu128. Residues Val129–Met152 form a helical membrane-spanning segment. At Glu153–Glu155 the chain is on the mitochondrial matrix side. Residues Arg156–Glu183 form a helical membrane-spanning segment. Residues Ala184–Asp190 are Mitochondrial intermembrane-facing. A helical membrane pass occupies residues Gly191 to Val223. Residues Leu224–His232 are Mitochondrial matrix-facing. A helical transmembrane segment spans residues Phe233–Ile256. The Mitochondrial intermembrane portion of the chain corresponds to Tyr257–Ser261.

The protein belongs to the cytochrome c oxidase subunit 3 family. As to quaternary structure, component of the cytochrome c oxidase (complex IV, CIV), a multisubunit enzyme composed of 14 subunits. The complex is composed of a catalytic core of 3 subunits MT-CO1, MT-CO2 and MT-CO3, encoded in the mitochondrial DNA, and 11 supernumerary subunits COX4I, COX5A, COX5B, COX6A, COX6B, COX6C, COX7A, COX7B, COX7C, COX8 and NDUFA4, which are encoded in the nuclear genome. The complex exists as a monomer or a dimer and forms supercomplexes (SCs) in the inner mitochondrial membrane with NADH-ubiquinone oxidoreductase (complex I, CI) and ubiquinol-cytochrome c oxidoreductase (cytochrome b-c1 complex, complex III, CIII), resulting in different assemblies (supercomplex SCI(1)III(2)IV(1) and megacomplex MCI(2)III(2)IV(2)).

Its subcellular location is the mitochondrion inner membrane. The catalysed reaction is 4 Fe(II)-[cytochrome c] + O2 + 8 H(+)(in) = 4 Fe(III)-[cytochrome c] + 2 H2O + 4 H(+)(out). Functionally, component of the cytochrome c oxidase, the last enzyme in the mitochondrial electron transport chain which drives oxidative phosphorylation. The respiratory chain contains 3 multisubunit complexes succinate dehydrogenase (complex II, CII), ubiquinol-cytochrome c oxidoreductase (cytochrome b-c1 complex, complex III, CIII) and cytochrome c oxidase (complex IV, CIV), that cooperate to transfer electrons derived from NADH and succinate to molecular oxygen, creating an electrochemical gradient over the inner membrane that drives transmembrane transport and the ATP synthase. Cytochrome c oxidase is the component of the respiratory chain that catalyzes the reduction of oxygen to water. Electrons originating from reduced cytochrome c in the intermembrane space (IMS) are transferred via the dinuclear copper A center (CU(A)) of subunit 2 and heme A of subunit 1 to the active site in subunit 1, a binuclear center (BNC) formed by heme A3 and copper B (CU(B)). The BNC reduces molecular oxygen to 2 water molecules using 4 electrons from cytochrome c in the IMS and 4 protons from the mitochondrial matrix. This chain is Cytochrome c oxidase subunit 3 (mt-co3), found in Danio rerio (Zebrafish).